Here is a 91-residue protein sequence, read N- to C-terminus: Lipolysis-activating peptide 1-alpha chain (91 aa).

The signal sequence occupies residues 1–22 (MMKLVLFGIIVILFSLIGSIHG). The LCN-type CS-alpha/beta domain occupies 24–87 (SGNYPLNPYG…VWNAVKKHCK (64 aa)). Cystine bridges form between Cys-38-Cys-61, Cys-47-Cys-66, and Cys-51-Cys-68.

It belongs to the long (3 C-C) scorpion toxin superfamily. Monomer (edited version) and heterodimer (non-edited version) of this alpha chain and a beta chain (AC P84809). Expressed by the venom gland.

The protein localises to the secreted. In terms of biological role, the heterodimer non-edited LVP1 induces lipolysis in rat adipocytes. Induction of lipolysis by LVP1 appears to be mediated through the beta-2 adrenergic receptor pathway (ADRB2). Intracerebroventricular injection is not toxic to mice. Its function is as follows. The edited BmKBTx-like, similar to beta-toxins, may modulate voltage-gated sodium channels (Nav) and may block voltage-gated potassium channels (Kv). The chain is Lipolysis-activating peptide 1-alpha chain from Buthus occitanus tunetanus (Common European scorpion).